The sequence spans 233 residues: Cilia- and flagella-associated protein 299 (233 aa).

Abundantly expressed in testis, specifically in spermatogonia and primary spermatocytes but not in secondary spermatocytes and spermatids.

Its subcellular location is the cytoplasm. It localises to the nucleus. Functionally, may be involved in spermatogenesis. In Mus musculus (Mouse), this protein is Cilia- and flagella-associated protein 299.